Consider the following 29-residue polypeptide: Kalata-B4 (29 aa).

Positions 1–29 (GLPVCGETCVGGTCNTPGCTCSWPVCTRD) form a cross-link, cyclopeptide (Gly-Asp). 3 cysteine pairs are disulfide-bonded: cysteine 5–cysteine 19, cysteine 9–cysteine 21, and cysteine 14–cysteine 26.

This is a cyclic peptide.

Probably participates in a plant defense mechanism. In Oldenlandia affinis, this protein is Kalata-B4.